The following is a 288-amino-acid chain: Pyridoxal kinase PdxY (288 aa).

Substrate is bound by residues S12 and 47–48; that span reads TQ. ATP-binding positions include D114, E151, K184, and 211 to 214; that span reads RPLL. D225 is a substrate binding site.

The protein belongs to the pyridoxine kinase family. PdxY subfamily. As to quaternary structure, homodimer. It depends on Mg(2+) as a cofactor.

It carries out the reaction pyridoxal + ATP = pyridoxal 5'-phosphate + ADP + H(+). It participates in cofactor metabolism; pyridoxal 5'-phosphate salvage; pyridoxal 5'-phosphate from pyridoxal: step 1/1. In terms of biological role, pyridoxal kinase involved in the salvage pathway of pyridoxal 5'-phosphate (PLP). Catalyzes the phosphorylation of pyridoxal to PLP. The protein is Pyridoxal kinase PdxY of Pseudomonas syringae pv. tomato (strain ATCC BAA-871 / DC3000).